A 108-amino-acid polypeptide reads, in one-letter code: Dormancy-associated protein homolog 1 (108 aa).

Residues 28 to 59 (DIKGVGEGSSSKTVAAVAGSPGTPTTPGSARK) form a disordered region. Ser-47 carries the post-translational modification Phosphoserine. Thr-50 is subject to Phosphothreonine.

This sequence belongs to the DRM1/ARP family. Expressed mainly in the low bolt.

This Arabidopsis thaliana (Mouse-ear cress) protein is Dormancy-associated protein homolog 1.